Consider the following 619-residue polypeptide: Phosphoenolpyruvate carboxykinase [GTP] (619 aa).

Substrate-binding positions include Arg-81 and 230-232; that span reads YGG. Residues Lys-239 and His-259 each coordinate Mn(2+). Ser-281 contributes to the substrate binding site. Residue 282 to 287 coordinates GTP; the sequence is ACGKTN. Residue Cys-283 is part of the active site. Position 306 (Asp-306) interacts with Mn(2+). 399–401 is a substrate binding site; it reads NSR. Residues Arg-401, Arg-432, and 525-528 each bind GTP; that span reads YGQN.

Belongs to the phosphoenolpyruvate carboxykinase [GTP] family. In terms of assembly, monomer. The cofactor is Mn(2+).

It carries out the reaction oxaloacetate + GTP = phosphoenolpyruvate + GDP + CO2. Its function is as follows. In parasitic nematodes PEPCK carboxylates phosphoenolpyruvate to oxaloacetate thus introducing the products of glycolysis to mitochondrial metabolism. Functionally, catalyzes the conversion of oxaloacetate (OAA) to phosphoenolpyruvate (PEP), the rate-limiting step in the metabolic pathway that produces glucose from lactate and other precursors derived from the citric acid cycle. This is Phosphoenolpyruvate carboxykinase [GTP] (PEPCK) from Haemonchus contortus (Barber pole worm).